The chain runs to 213 residues: Peroxiredoxin-5, mitochondrial (213 aa).

A mitochondrion-targeting transit peptide spans 1-51 (MVQLRFCVLGSIAGSVLRASATWTCVAGRAGRKGAGWECGGARSFSSAAVT). In terms of domain architecture, Thioredoxin spans 55–213 (IKVGDTIPSV…SLAPNILSQL (159 aa)). Lys74 is modified (N6-acetyllysine). Residue Lys82 is modified to N6-acetyllysine; alternate. Lys82 is modified (N6-succinyllysine; alternate). Cys99 (cysteine sulfenic acid (-SOH) intermediate) is an active-site residue. The S-palmitoyl cysteine moiety is linked to residue Cys99. Residues Cys99 and Cys203 are joined by a disulfide bond. The residue at position 115 (Lys115) is an N6-succinyllysine. 2 positions are modified to phosphoserine: Ser170 and Ser181. The Microbody targeting signal signature appears at 211 to 213 (SQL).

Belongs to the peroxiredoxin family. Prx5 subfamily. In terms of assembly, monomer. S-palmitoylated. Palmitoylation occurs on the active site, inhibiting its reactivity; therefore PRDX5 palmitoylation status determines its antioxidant capacity. In terms of processing, S-palmitoylated. Depalmitoylated by ABHD10.

The protein resides in the mitochondrion. The protein localises to the cytoplasm. It is found in the peroxisome matrix. It catalyses the reaction a hydroperoxide + [thioredoxin]-dithiol = an alcohol + [thioredoxin]-disulfide + H2O. Thiol-specific peroxidase that catalyzes the reduction of hydrogen peroxide and organic hydroperoxides to water and alcohols, respectively. Plays a role in cell protection against oxidative stress by detoxifying peroxides and as sensor of hydrogen peroxide-mediated signaling events. This is Peroxiredoxin-5, mitochondrial from Rattus norvegicus (Rat).